The sequence spans 529 residues: MTKDIHQHRILILDFGSQYTQLIARRVREIGVYCELWAWDVTEEQMREFNPSGIILSGGPESVTEAGSPRAPEYVFNAGVPVFGICYGMQTMAEQLGGKVQSSTEREFGYAKVEVLGNSGKTSALLRNIEDAIADNGNALLDVWMSHGDKVTTIPADFTTIAQTATCPHAAMANEAKRFYGVQFHPEVTHTRQGARMLEHFVKDICGCECLWTPATIIDDAVARIREQVGDDEVILGLSGGVDSSVVAMLVHRAIGDRLTCVFVDNGLLRLNEGQQVMEMFGDHFGLNIVKVDAEERFLSALAGEDEPEAKRKIIGRVFVEVFDDEAKKLKNARWLAQGTIYPDVIESAASKTGKAHVIKSHHNVGGLPEEMKMGLVEPLRELFKDEVRRVGLELGLPYDMLYRHPFPGPGLGVRVLGEVKKEYCDLLRKADAVFIEELRKADLYNQVSQAFAVFLPVRSVGVMGDGRKYDWVIALRAVETIDFMTAHWAHLPYDFLGHVSNRIINEINGISRVVYDVSGKPPATIEWE.

A Glutamine amidotransferase type-1 domain is found at arginine 9–leucine 211. Cysteine 86 serves as the catalytic Nucleophile. Catalysis depends on residues histidine 185 and glutamate 187. A GMPS ATP-PPase domain is found at tryptophan 212–arginine 404. Serine 239–serine 245 provides a ligand contact to ATP.

As to quaternary structure, homodimer.

It catalyses the reaction XMP + L-glutamine + ATP + H2O = GMP + L-glutamate + AMP + diphosphate + 2 H(+). Its pathway is purine metabolism; GMP biosynthesis; GMP from XMP (L-Gln route): step 1/1. Functionally, catalyzes the synthesis of GMP from XMP. This chain is GMP synthase [glutamine-hydrolyzing], found in Aeromonas hydrophila subsp. hydrophila (strain ATCC 7966 / DSM 30187 / BCRC 13018 / CCUG 14551 / JCM 1027 / KCTC 2358 / NCIMB 9240 / NCTC 8049).